Reading from the N-terminus, the 255-residue chain is Ribose-5-phosphate isomerase (255 aa).

Belongs to the ribose 5-phosphate isomerase family.

It localises to the cytoplasm. The catalysed reaction is aldehydo-D-ribose 5-phosphate = D-ribulose 5-phosphate. The protein operates within carbohydrate degradation; pentose phosphate pathway; D-ribose 5-phosphate from D-ribulose 5-phosphate (non-oxidative stage): step 1/1. This chain is Ribose-5-phosphate isomerase (RKI1), found in Eremothecium gossypii (strain ATCC 10895 / CBS 109.51 / FGSC 9923 / NRRL Y-1056) (Yeast).